An 846-amino-acid chain; its full sequence is Translation initiation factor IF-2 (846 aa).

The tract at residues 198–219 (YKREEEEKKSKAKKAGGKGFKK) is disordered. A compositionally biased stretch (basic residues) spans 207–219 (SKAKKAGGKGFKK). The tr-type G domain occupies 345–512 (SRAPVVTIMG…AVLLQSEVLE (168 aa)). The segment at 354-361 (GHVDHGKT) is G1. 354 to 361 (GHVDHGKT) is a GTP binding site. Residues 379–383 (GITQH) are G2. The segment at 400–403 (DTPG) is G3. Residues 400–404 (DTPGH) and 454–457 (NKID) contribute to the GTP site. A G4 region spans residues 454 to 457 (NKID). The tract at residues 490-492 (SAK) is G5.

Belongs to the TRAFAC class translation factor GTPase superfamily. Classic translation factor GTPase family. IF-2 subfamily.

The protein resides in the cytoplasm. In terms of biological role, one of the essential components for the initiation of protein synthesis. Protects formylmethionyl-tRNA from spontaneous hydrolysis and promotes its binding to the 30S ribosomal subunits. Also involved in the hydrolysis of GTP during the formation of the 70S ribosomal complex. This chain is Translation initiation factor IF-2, found in Francisella tularensis subsp. tularensis (strain SCHU S4 / Schu 4).